We begin with the raw amino-acid sequence, 55 residues long: ATP synthase protein 8 (55 aa).

A helical membrane pass occupies residues 4-24 (LNPNPWFTILIFTWAVFLTIL).

It belongs to the ATPase protein 8 family. F-type ATPases have 2 components, CF(1) - the catalytic core - and CF(0) - the membrane proton channel.

Its subcellular location is the mitochondrion membrane. Functionally, mitochondrial membrane ATP synthase (F(1)F(0) ATP synthase or Complex V) produces ATP from ADP in the presence of a proton gradient across the membrane which is generated by electron transport complexes of the respiratory chain. F-type ATPases consist of two structural domains, F(1) - containing the extramembraneous catalytic core and F(0) - containing the membrane proton channel, linked together by a central stalk and a peripheral stalk. During catalysis, ATP synthesis in the catalytic domain of F(1) is coupled via a rotary mechanism of the central stalk subunits to proton translocation. Part of the complex F(0) domain. Minor subunit located with subunit a in the membrane. The protein is ATP synthase protein 8 (mt-atp8) of Polypterus ornatipinnis (Ornate bichir).